The chain runs to 206 residues: Probable NAD(+) phosphorylase Rv3189 (206 aa).

It belongs to the MbcT/ParT/Res family. As to quaternary structure, forms a heterotetramer with cognate antitoxin Rv3188.

The enzyme catalyses phosphate + NAD(+) = ADP-alpha-D-ribose 1''-phosphate + nicotinamide + H(+). In terms of biological role, probable toxic component of a type II toxin-antitoxin (TA) system. Degrades NAD(+) by phosphorolysis. Neutralized by its cognate antitoxin Rv3188. The sequence is that of Probable NAD(+) phosphorylase Rv3189 from Mycobacterium tuberculosis (strain ATCC 25618 / H37Rv).